The primary structure comprises 236 residues: Small ribosomal subunit protein uS2c (236 aa).

It belongs to the universal ribosomal protein uS2 family.

It is found in the plastid. The polypeptide is Small ribosomal subunit protein uS2c (rps2) (Cuscuta exaltata (Tall dodder)).